Consider the following 658-residue polypeptide: UvrABC system protein B (658 aa).

Positions Lys-25–Ile-414 constitute a Helicase ATP-binding domain. Residue Gly-38 to Thr-45 coordinates ATP. Residues His-91 to Ile-114 carry the Beta-hairpin motif. In terms of domain architecture, Helicase C-terminal spans Gln-433–Arg-607. The UVR domain maps to Glu-623–Leu-658.

The protein belongs to the UvrB family. Forms a heterotetramer with UvrA during the search for lesions. Interacts with UvrC in an incision complex.

Its subcellular location is the cytoplasm. Functionally, the UvrABC repair system catalyzes the recognition and processing of DNA lesions. A damage recognition complex composed of 2 UvrA and 2 UvrB subunits scans DNA for abnormalities. Upon binding of the UvrA(2)B(2) complex to a putative damaged site, the DNA wraps around one UvrB monomer. DNA wrap is dependent on ATP binding by UvrB and probably causes local melting of the DNA helix, facilitating insertion of UvrB beta-hairpin between the DNA strands. Then UvrB probes one DNA strand for the presence of a lesion. If a lesion is found the UvrA subunits dissociate and the UvrB-DNA preincision complex is formed. This complex is subsequently bound by UvrC and the second UvrB is released. If no lesion is found, the DNA wraps around the other UvrB subunit that will check the other stand for damage. The protein is UvrABC system protein B of Helicobacter pylori (strain ATCC 700392 / 26695) (Campylobacter pylori).